A 32-amino-acid chain; its full sequence is Ribulose bisphosphate carboxylase/oxygenase activase, chloroplastic (32 aa).

The disordered stretch occupies residues 13–32 (FGALREGPPTFEQPAMTIEK).

Belongs to the RuBisCO activase family.

Its subcellular location is the plastid. The protein resides in the chloroplast stroma. Its function is as follows. Activation of RuBisCO (ribulose-1,5-bisphosphate carboxylase/oxygenase; EC 4.1.1.39) involves the ATP-dependent carboxylation of the epsilon-amino group of lysine leading to a carbamate structure. The chain is Ribulose bisphosphate carboxylase/oxygenase activase, chloroplastic from Populus euphratica (Euphrates poplar).